Here is a 49-residue protein sequence, read N- to C-terminus: Large ribosomal subunit protein bL33 (49 aa).

This sequence belongs to the bacterial ribosomal protein bL33 family.

The polypeptide is Large ribosomal subunit protein bL33 (Syntrophobacter fumaroxidans (strain DSM 10017 / MPOB)).